A 281-amino-acid polypeptide reads, in one-letter code: Pantothenate synthetase (281 aa).

Residue M30–H37 coordinates ATP. H37 functions as the Proton donor in the catalytic mechanism. Q61 is a binding site for (R)-pantoate. Beta-alanine is bound at residue Q61. ATP is bound at residue G149–D152. Q155 contacts (R)-pantoate. ATP contacts are provided by residues I178 and M186 to R189.

The protein belongs to the pantothenate synthetase family. Homodimer.

It is found in the cytoplasm. It carries out the reaction (R)-pantoate + beta-alanine + ATP = (R)-pantothenate + AMP + diphosphate + H(+). Its pathway is cofactor biosynthesis; (R)-pantothenate biosynthesis; (R)-pantothenate from (R)-pantoate and beta-alanine: step 1/1. In terms of biological role, catalyzes the condensation of pantoate with beta-alanine in an ATP-dependent reaction via a pantoyl-adenylate intermediate. The chain is Pantothenate synthetase from Shewanella baltica (strain OS223).